Here is a 292-residue protein sequence, read N- to C-terminus: 33 kDa chaperonin (292 aa).

Cystine bridges form between Cys-230–Cys-232 and Cys-263–Cys-266.

The protein belongs to the HSP33 family. Post-translationally, under oxidizing conditions two disulfide bonds are formed involving the reactive cysteines. Under reducing conditions zinc is bound to the reactive cysteines and the protein is inactive.

It is found in the cytoplasm. In terms of biological role, redox regulated molecular chaperone. Protects both thermally unfolding and oxidatively damaged proteins from irreversible aggregation. Plays an important role in the bacterial defense system toward oxidative stress. The polypeptide is 33 kDa chaperonin (Enterobacter sp. (strain 638)).